We begin with the raw amino-acid sequence, 159 residues long: Type-1 angiotensin II receptor-associated protein (159 aa).

Residues 1-23 (MELPAVNLKVILLGHWLLTTWGC) lie on the Extracellular side of the membrane. A helical membrane pass occupies residues 24–44 (IVFSGSYAWANFTILALGVWA). The Cytoplasmic segment spans residues 45–55 (VAQRDSIDAIS). Residues 56 to 76 (MFLGGLLATIFLDIVHISIFY) traverse the membrane as a helical segment. At 77 to 86 (PRVSLTDTGR) the chain is on the extracellular side. The helical transmembrane segment at 87–107 (FGVGMAILSLLLKPLSCCFVY) threads the bilayer. The Cytoplasmic segment spans residues 108-159 (HMYRERGGELLVHTGFLGSSQDRSAYQTIDSAEAPADPFAVPEGRSQDARGY). Positions 110-122 (YRERGGELLVHTG) are interaction with AGTR1. Residues Ser126 and Ser127 each carry the phosphoserine modification. Thr135 carries the phosphothreonine modification. Residues Ser138 and Ser153 each carry the phosphoserine modification. Residues 140-159 (EAPADPFAVPEGRSQDARGY) are disordered.

Interacts with RACK1, and with the C-terminal region of AGTR1. As to expression, ubiquitous but more abundant in kidney, heart, pancreas and thyroid.

Its subcellular location is the endoplasmic reticulum membrane. It is found in the golgi apparatus membrane. The protein localises to the cytoplasmic vesicle membrane. Its function is as follows. Appears to be a negative regulator of type-1 angiotensin II receptor-mediated signaling by regulating receptor internalization as well as mechanism of receptor desensitization such as phosphorylation. Also induces a decrease in cell proliferation and angiotensin II-stimulated transcriptional activity. The polypeptide is Type-1 angiotensin II receptor-associated protein (AGTRAP) (Homo sapiens (Human)).